A 139-amino-acid polypeptide reads, in one-letter code: uncharacterized protein (139 aa).

Residues 1–32 (MEFHDDKKNELQKKEEIITEAIDTLFQSSAFG) form the signal peptide. Residues 44–139 (SSLKDVQTTI…TLFFPKNKHE (96 aa)) enclose the sHSP domain.

This sequence belongs to the small heat shock protein (HSP20) family.

This is an uncharacterized protein from Bacillus subtilis (strain 168).